A 297-amino-acid chain; its full sequence is Probable transcription factor vicR (297 aa).

Disordered regions lie at residues 45–80 (LPGL…HSET) and 100–134 (TNQA…KNVH). The segment covering 58–67 (QKEEMRRKNA) has biased composition (basic and acidic residues). Residues 69–80 (AQMQNDSNHSET) are compositionally biased toward polar residues. A compositionally biased stretch (basic and acidic residues) spans 110-124 (RSREDITNSRAERHS).

The protein localises to the nucleus. Functionally, probable transcription factor; part of the gene cluster that mediates the biosynthesis of the secondary metabolite victorin, the molecular basis for Victoria blight of oats. May play a role in the regulation of the production of victorin. The sequence is that of Probable transcription factor vicR from Bipolaris victoriae (strain FI3) (Victoria blight of oats agent).